The sequence spans 63 residues: Large ribosomal subunit protein bL32 (63 aa).

Belongs to the bacterial ribosomal protein bL32 family.

The sequence is that of Large ribosomal subunit protein bL32 from Acholeplasma laidlawii.